A 465-amino-acid polypeptide reads, in one-letter code: Nuclear pore complex protein NUP50B (465 aa).

2 disordered regions span residues 1 to 44 (MGDS…TFNT) and 59 to 244 (RRTD…FHQH). G2 is subject to N-acetylglycine. A compositionally biased stretch (acidic residues) spans 26–35 (GLDDDDEDTS). Over residues 81–97 (PFTAPAPSTAAAETTKP) the composition is skewed to low complexity. Composition is skewed to basic and acidic residues over residues 105–127 (TLAD…KSDA), 141–157 (ISAK…KEMS), and 216–233 (TEKE…EKNG). S125 is subject to Phosphoserine. 3 tandem repeats follow at residues 266–267 (FG), 286–287 (FG), and 297–298 (FG). The tract at residues 266–298 (FGLVPQEGSTGSGSEQSSFSFGQANNGNSSLFG) is 3 X 2 AA repeats of F-G. Disordered stretches follow at residues 308-330 (KSTE…GEEN) and 439-465 (HKDS…AEDA). The residue at position 455 (T455) is a Phosphothreonine. Polar residues predominate over residues 456–465 (PENSPSAEDA). S459 carries the post-translational modification Phosphoserine.

Part of the nuclear pore complex (NPC). The NPC has an eight-fold symmetrical structure comprising a central transport channel and two rings, the cytoplasmic and nuclear rings, to which eight filaments are attached. The cytoplasmic filaments have loose ends, while the nuclear filaments are joined in a distal ring, forming a nuclear basket. NPCs are highly dynamic in configuration and composition, and can be devided in 3 subcomplexes, the NUP62 subcomplex, the NUP107-160 subcomplex and the NUP93 subcomplex, containing approximately 30 different nucleoporin proteins.

Its subcellular location is the nucleus. It is found in the nucleoplasm. The protein resides in the nuclear pore complex. Functionally, probably involved in nucleocytoplasmic transport via its interactions with importins and Ran, rather than by forming part of the nuclear pore complex (NPC) scaffolding. The chain is Nuclear pore complex protein NUP50B from Arabidopsis thaliana (Mouse-ear cress).